A 191-amino-acid polypeptide reads, in one-letter code: Large ribosomal subunit protein uL29m (191 aa).

Belongs to the universal ribosomal protein uL29 family. Component of the mitochondrial large ribosomal subunit. Mature mitochondrial ribosomes consist of a small (37S) and a large (54S) subunit. The 37S subunit contains at least 33 different proteins and 1 molecule of RNA (15S). The 54S subunit contains at least 45 different proteins and 1 molecule of RNA (21S).

It localises to the mitochondrion. The protein is Large ribosomal subunit protein uL29m (MRPL4) of Sclerotinia sclerotiorum (strain ATCC 18683 / 1980 / Ss-1) (White mold).